We begin with the raw amino-acid sequence, 453 residues long: MNLYELFLNQKLLYGTDPHFNGVFLTLLEKFGLHFKDLTALWKHAKTITDFDEQGIVNALKAYFVDQLPLPYITGSVKLGSLTFKTQPGVFIPRADSLALLKVVKAQNLKTAVDLCCGSGTLAIALKKRFPHLNVYGSDLNPQALQLAAQNARLNMVEVQWIEADFLAALAQVNTPIDLIITNPPYLNESQLDQTLNHEPRNSLVADGNGILFYQKLYNFLLGNRQVKQVILECSPTQKKEFLALFSIFKTSEIYTSHKQFIGLSIDNTKLPVLKIAQTKQIKALLDKGMTAIIPTDTQIGLMSYCQQDLDHIKQRDPNKHYVQFLAPSQINQLPKQLQKLAKLFWPGAYTFIVDGQSYRLPNSPQLLKLLKTVGLIYCTSANQAKQKPFGKLSAYQNDPYWVQQNCFIVQNSFKSNNEPSLIYNLDTKQIVRGSSTQLQRFQALLAKHKLRH.

The 162-residue stretch at Ile276–Thr437 folds into the YrdC-like domain.

This is an uncharacterized protein from Mycoplasma pneumoniae (strain ATCC 29342 / M129 / Subtype 1) (Mycoplasmoides pneumoniae).